A 252-amino-acid chain; its full sequence is Uracil-DNA glycosylase (252 aa).

Asp78 acts as the Proton acceptor in catalysis.

This sequence belongs to the uracil-DNA glycosylase (UDG) superfamily. UNG family.

The protein resides in the cytoplasm. The catalysed reaction is Hydrolyzes single-stranded DNA or mismatched double-stranded DNA and polynucleotides, releasing free uracil.. In terms of biological role, excises uracil residues from the DNA which can arise as a result of misincorporation of dUMP residues by DNA polymerase or due to deamination of cytosine. The protein is Uracil-DNA glycosylase of Bordetella avium (strain 197N).